Consider the following 477-residue polypeptide: Inner membrane protein YbhI (477 aa).

The Cytoplasmic portion of the chain corresponds to 1-5 (MNKKS). Residues 6 to 26 (LWKLILILAIPCIIGFMPAPA) traverse the membrane as a helical segment. Residue glycine 27 is a topological domain, periplasmic. The chain crosses the membrane as a helical span at residues 28 to 48 (LSELAWVLFGIYLAAIVGLVI). Residues 49–50 (KP) lie on the Cytoplasmic side of the membrane. The helical transmembrane segment at 51–71 (FPEPVVLLIAVAASMVVVGNL) threads the bilayer. Over 72-87 (SDGAFKTTAVLSGYSS) the chain is Periplasmic. A helical transmembrane segment spans residues 88–108 (GTTWLVFSAFTLSAAFVTTGL). The Cytoplasmic portion of the chain corresponds to 109-148 (GKRIAYLLIGKIGNTTLGLGYVTVFLDLVLAPATPSNTAR). A helical membrane pass occupies residues 149 to 169 (AGGIVLPIINSVAVALGSEPE). Over 170 to 219 (KSPRRVGHYLMMSIYMVTKTTSYMFFTAMAGNILALKMINDILHLQISWG) the chain is Periplasmic. Residues 220–240 (GWALAAGLPGIIMLLVTPLVI) traverse the membrane as a helical segment. Over 241–272 (YTMYPPEIKKVDNKTIAKAGLAELGPMKIREK) the chain is Cytoplasmic. Residues 273–293 (MLLGVFVLALLGWIFSKSLGV) form a helical membrane-spanning segment. Residues 294–297 (DEST) are Periplasmic-facing. Residues 298 to 318 (VAIVVMATMLLLGIVTWEDVV) traverse the membrane as a helical segment. Topologically, residues 319 to 356 (KNKGGWNTLIWYGGIIGLSSLLSKVKFFEWLAEVFKNN) are cytoplasmic. The chain crosses the membrane as a helical span at residues 357–377 (LAFDGHGNVAFFVIIFLSIIV). A topological domain (periplasmic) is located at residue arginine 378. Residues 379–399 (YFFASGSAYIVAMLPVFAMLA) traverse the membrane as a helical segment. The Cytoplasmic portion of the chain corresponds to 400–445 (NVSGAPLMLTALALLFSNSYGGMVTHYGGAAGPVIFGVGYNDIKSW). A helical membrane pass occupies residues 446 to 466 (WLVGAVLTILTFLVHITLGVW). Over 467–477 (WWNMLIGWNML) the chain is Periplasmic.

It belongs to the SLC13A/DASS transporter (TC 2.A.47) family. DIT1 subfamily.

It is found in the cell inner membrane. This chain is Inner membrane protein YbhI (ybhI), found in Escherichia coli (strain K12).